An 89-amino-acid chain; its full sequence is Acylphosphatase (89 aa).

One can recognise an Acylphosphatase-like domain in the interval 3–89 (CKRWILYGRV…GNYGSFHIEY (87 aa)). Catalysis depends on residues arginine 18 and asparagine 36.

It belongs to the acylphosphatase family.

It catalyses the reaction an acyl phosphate + H2O = a carboxylate + phosphate + H(+). The protein is Acylphosphatase (acyP) of Petrotoga mobilis (strain DSM 10674 / SJ95).